The sequence spans 81 residues: Acyl carrier protein (81 aa).

Positions 3–78 (QEIFDKIKNI…EAVNIIAEKT (76 aa)) constitute a Carrier domain. Ser38 carries the post-translational modification O-(pantetheine 4'-phosphoryl)serine.

The protein belongs to the acyl carrier protein (ACP) family. Post-translationally, 4'-phosphopantetheine is transferred from CoA to a specific serine of apo-ACP by AcpS. This modification is essential for activity because fatty acids are bound in thioester linkage to the sulfhydryl of the prosthetic group.

The protein resides in the cytoplasm. It functions in the pathway lipid metabolism; fatty acid biosynthesis. In terms of biological role, carrier of the growing fatty acid chain in fatty acid biosynthesis. This is Acyl carrier protein from Picosynechococcus sp. (strain ATCC 27264 / PCC 7002 / PR-6) (Agmenellum quadruplicatum).